The following is a 367-amino-acid chain: CCN family member 4 (367 aa).

The signal sequence occupies residues 1 to 22 (MRWFLPWTLAAVTAAAASTVLA). Positions 45-118 (RPQFCKWPCE…RYAIGVCAQV (74 aa)) constitute an IGFBP N-terminal domain. 4 disulfide bridges follow: Cys49/Cys73, Cys53/Cys75, Cys55/Cys76, and Cys62/Cys79. Asn86 carries N-linked (GlcNAc...) asparagine glycosylation. Intrachain disulfides connect Cys87–Cys101 and Cys93–Cys115. A VWFC domain is found at 121–186 (VGCVLDGVRY…GHCCEQWVCE (66 aa)). The N-linked (GlcNAc...) asparagine glycan is linked to Asn143. Residues 215–260 (NCIAYTSPWSPCSTSCGLGVSTRISNVNAQCWPEQESRLCNLRPCD) enclose the TSP type-1 domain. 5 cysteine pairs are disulfide-bonded: Cys273/Cys310, Cys290/Cys324, Cys301/Cys340, Cys304/Cys342, and Cys309/Cys346. The region spanning 273-347 (CLAVYQPEAS…NACFCNLSCR (75 aa)) is the CTCK domain. Asn284 carries N-linked (GlcNAc...) asparagine glycosylation. The N-linked (GlcNAc...) asparagine glycan is linked to Asn343.

The protein belongs to the CCN family. In terms of tissue distribution, expressed in heart, kidney, lung, pancreas, placenta, ovary, small intestine and spleen. Isoform 2 is expressed predominantly in scirrhous gastric carcinoma and, weakly in placenta. Overexpression is associated with several cancers including breast cancer and colon tumors. Isoform 2 is overexpressed in scirrhous gastric carcinoma.

Its subcellular location is the secreted. In terms of biological role, downstream regulator in the Wnt/Frizzled-signaling pathway. Associated with cell survival. Attenuates p53-mediated apoptosis in response to DNA damage through activation of AKT kinase. Up-regulates the anti-apoptotic Bcl-X(L) protein. Adheres to skin and melanoma fibroblasts. In vitro binding to skin fibroblasts occurs through the proteoglycans, decorin and biglycan. In Homo sapiens (Human), this protein is CCN family member 4.